Here is a 545-residue protein sequence, read N- to C-terminus: Cytochrome P450 monooxygenase 212 (545 aa).

Positions 1 to 14 (MAAYAWLYCALALG) are cleaved as a signal peptide. Residue cysteine 486 coordinates heme.

This sequence belongs to the cytochrome P450 family. The cofactor is heme.

It functions in the pathway secondary metabolite biosynthesis. Cytochrome P450 monooxygenase that is able to use anthracene and pyrene as substrates for oxidation. This chain is Cytochrome P450 monooxygenase 212, found in Postia placenta (strain ATCC 44394 / Madison 698-R) (Brown rot fungus).